The sequence spans 358 residues: Trace amine-associated receptor 7b (358 aa).

At 1–47 (MATDDDRFPWDQDSILSRDLLSASSMQLCYEKLNRSCVRSPYSPGPR) the chain is on the extracellular side. Asparagine 34 is a glycosylation site (N-linked (GlcNAc...) asparagine). 2 cysteine pairs are disulfide-bonded: cysteine 37-cysteine 201 and cysteine 120-cysteine 205. Residues 48-68 (LILYAVFGFGAVLAVCGNLLV) form a helical membrane-spanning segment. At 69 to 83 (MTSILHFRQLHSPAN) the chain is on the cytoplasmic side. The chain crosses the membrane as a helical span at residues 84–104 (FLVASLACADFLVGLTVMPFS). Over 105–125 (MVRSVEGCWYFGDIYCKFHSS) the chain is Extracellular. A helical membrane pass occupies residues 126 to 147 (FDGSFCYSSIFHLCFISADRYI). The Cytoplasmic segment spans residues 148-166 (AVSDPLIYPTRFTASVSGK). Residues 167 to 187 (CITFSWLLSIIYSFSLFYTGV) traverse the membrane as a helical segment. Topologically, residues 188–211 (NEAGLEDLVSALTCVGGCQIAVNQ) are extracellular. Asparagine 210 carries an N-linked (GlcNAc...) asparagine glycan. A helical membrane pass occupies residues 212-232 (SWVFINFLLFLVPALVMMTVY). The Cytoplasmic segment spans residues 233–274 (SKIFLIAKQQAQNIEKMGKQTARASESYKDRVAKRERKAAKT). A helical transmembrane segment spans residues 275–295 (LGIAVAAFLLSWLPYFIDSII). The Extracellular portion of the chain corresponds to 296–309 (DAFLGFVTPTYVYE). The helical transmembrane segment at 310-332 (ILVWIGYYNSAMNPLIYAFFYPW) threads the bilayer. Topologically, residues 333 to 358 (FRKAIKLIVTGKILRENSSATNLFPE) are cytoplasmic.

It belongs to the G-protein coupled receptor 1 family.

The protein resides in the cell membrane. Olfactory receptor specific for N,N-dimethylalkylamines trace amines, such as N,N-dimethylcyclohexylamine. Trace amine compounds are enriched in animal body fluids and act on trace amine-associated receptors (TAARs) to elicit both intraspecific and interspecific innate behaviors. Ligand-binding causes a conformation change that triggers signaling via G(s)-class of G alpha proteins (GNAL or GNAS). The polypeptide is Trace amine-associated receptor 7b (Rattus norvegicus (Rat)).